The primary structure comprises 658 residues: UvrABC system protein B (658 aa).

Residues 26-414 form the Helicase ATP-binding domain; it reads DGLRRGVKHQ…PGVVEQIIRP (389 aa). 39 to 46 is a binding site for ATP; the sequence is GATGTGKT. The Beta-hairpin signature appears at 92 to 115; that stretch reads YYDYYQPEAYVPQTDTYIEKDAKI. One can recognise a Helicase C-terminal domain in the interval 430–596; the sequence is QIDDLIGEIR…TVKKEIRDVI (167 aa). The region spanning 622–657 is the UVR domain; sequence EELIRTLEAEMKEAAKALDFERAAQLRDIIFELKAE.

Belongs to the UvrB family. Forms a heterotetramer with UvrA during the search for lesions. Interacts with UvrC in an incision complex.

It localises to the cytoplasm. In terms of biological role, the UvrABC repair system catalyzes the recognition and processing of DNA lesions. A damage recognition complex composed of 2 UvrA and 2 UvrB subunits scans DNA for abnormalities. Upon binding of the UvrA(2)B(2) complex to a putative damaged site, the DNA wraps around one UvrB monomer. DNA wrap is dependent on ATP binding by UvrB and probably causes local melting of the DNA helix, facilitating insertion of UvrB beta-hairpin between the DNA strands. Then UvrB probes one DNA strand for the presence of a lesion. If a lesion is found the UvrA subunits dissociate and the UvrB-DNA preincision complex is formed. This complex is subsequently bound by UvrC and the second UvrB is released. If no lesion is found, the DNA wraps around the other UvrB subunit that will check the other stand for damage. The protein is UvrABC system protein B of Geobacillus kaustophilus (strain HTA426).